The primary structure comprises 309 residues: Acetyl-coenzyme A carboxylase carboxyl transferase subunit beta (309 aa).

The CoA carboxyltransferase N-terminal domain maps to 29 to 298 (NSDWTSCCKG…AINSSENETS (270 aa)). Residues C35, C36, C52, and C55 each coordinate Zn(2+).

It belongs to the AccD/PCCB family. In terms of assembly, acetyl-CoA carboxylase is a heterohexamer composed of biotin carboxyl carrier protein (AccB), biotin carboxylase (AccC) and two subunits each of ACCase subunit alpha (AccA) and ACCase subunit beta (AccD). It depends on Zn(2+) as a cofactor.

It is found in the cytoplasm. It carries out the reaction N(6)-carboxybiotinyl-L-lysyl-[protein] + acetyl-CoA = N(6)-biotinyl-L-lysyl-[protein] + malonyl-CoA. Its pathway is lipid metabolism; malonyl-CoA biosynthesis; malonyl-CoA from acetyl-CoA: step 1/1. Component of the acetyl coenzyme A carboxylase (ACC) complex. Biotin carboxylase (BC) catalyzes the carboxylation of biotin on its carrier protein (BCCP) and then the CO(2) group is transferred by the transcarboxylase to acetyl-CoA to form malonyl-CoA. This Pelagibacter ubique (strain HTCC1062) protein is Acetyl-coenzyme A carboxylase carboxyl transferase subunit beta.